The chain runs to 218 residues: ATP phosphoribosyltransferase (218 aa).

It belongs to the ATP phosphoribosyltransferase family. Short subfamily. As to quaternary structure, heteromultimer composed of HisG and HisZ subunits.

The protein resides in the cytoplasm. It catalyses the reaction 1-(5-phospho-beta-D-ribosyl)-ATP + diphosphate = 5-phospho-alpha-D-ribose 1-diphosphate + ATP. It functions in the pathway amino-acid biosynthesis; L-histidine biosynthesis; L-histidine from 5-phospho-alpha-D-ribose 1-diphosphate: step 1/9. Functionally, catalyzes the condensation of ATP and 5-phosphoribose 1-diphosphate to form N'-(5'-phosphoribosyl)-ATP (PR-ATP). Has a crucial role in the pathway because the rate of histidine biosynthesis seems to be controlled primarily by regulation of HisG enzymatic activity. The protein is ATP phosphoribosyltransferase of Burkholderia thailandensis (strain ATCC 700388 / DSM 13276 / CCUG 48851 / CIP 106301 / E264).